The following is a 483-amino-acid chain: Arginine/agmatine antiporter (483 aa).

A run of 12 helical transmembrane segments spans residues 11-31, 41-61, 85-105, 124-144, 157-177, 208-228, 239-259, 289-309, 336-356, 364-384, 415-435, and 458-478; these read ILGTLALTGIVISSMIGGGIF, ASAGAVMLAWMLSGIGIFFIA, GFGPYVGFTIAWGYWLCQIFG, YFAGGNTIPAILLGSLLIWIF, FVNIIGAVCTLIPLLLFILIT, STMLVTLWAFIGIEGAVVISG, ATILGFSGCLLIYVLLSLLPF, VLMNTGLLIAVLTSWLSWTIL, PSFSLFMTSGLMQITMLLVYF, MLEITGVMVLPAYLTSSLFLV, LWLIYAGGLQHLFMVAILLAL, and EILKMTIVALAALLAIFLFSA.

It belongs to the amino acid-polyamine-organocation (APC) superfamily. Basic amino acid/polyamine antiporter (APA) (TC 2.A.3.2) family.

It is found in the cell inner membrane. Catalyzes the exchange of L-arginine for agmatine. The arginine uptake by the bacterium in the macrophage may be a virulence factor against the host innate immune response. The polypeptide is Arginine/agmatine antiporter (aaxC) (Chlamydia trachomatis serovar A (strain ATCC VR-571B / DSM 19440 / HAR-13)).